A 327-amino-acid chain; its full sequence is Tartrate-resistant acid phosphatase type 5 (327 aa).

A signal peptide spans 1 to 22 (MDSWVVLLGLQIIWLPLLTHGT). Residues aspartate 35, aspartate 73, tyrosine 76, and asparagine 112 each coordinate Fe cation. Residues asparagine 118 and asparagine 149 are each glycosylated (N-linked (GlcNAc...) asparagine). Cysteines 163 and 221 form a disulfide. Fe cation is bound by residues histidine 207, histidine 242, and histidine 244.

As to quaternary structure, exists either as monomer or, after proteolytic processing, as a dimer of two chains linked by disulfide bond(s). Fe cation is required as a cofactor. In terms of tissue distribution, characteristic constituent of osteoclasts.

It localises to the lysosome. The catalysed reaction is a phosphate monoester + H2O = an alcohol + phosphate. In terms of biological role, may play a role in the process of bone resorption. The osteoclastic trap acts on nucleotide tri- and diphosphates with higher affinity, compared with other substrates. This is Tartrate-resistant acid phosphatase type 5 (Acp5) from Mus musculus (Mouse).